Here is a 449-residue protein sequence, read N- to C-terminus: Tubulin beta-2 chain (449 aa).

Positions 11 and 69 each coordinate GTP. Glu69 contributes to the Mg(2+) binding site. Position 137 is a methylhistidine (His137). GTP contacts are provided by Ser138, Gly142, Thr143, Gly144, Asn204, and Asn226.

This sequence belongs to the tubulin family. In terms of assembly, dimer of alpha and beta chains. A typical microtubule is a hollow water-filled tube with an outer diameter of 25 nm and an inner diameter of 15 nM. Alpha-beta heterodimers associate head-to-tail to form protofilaments running lengthwise along the microtubule wall with the beta-tubulin subunit facing the microtubule plus end conferring a structural polarity. Microtubules usually have 13 protofilaments but different protofilament numbers can be found in some organisms and specialized cells. Requires Mg(2+) as cofactor.

It is found in the cytoplasm. Its subcellular location is the cytoskeleton. In terms of biological role, tubulin is the major constituent of microtubules, a cylinder consisting of laterally associated linear protofilaments composed of alpha- and beta-tubulin heterodimers. Microtubules grow by the addition of GTP-tubulin dimers to the microtubule end, where a stabilizing cap forms. Below the cap, tubulin dimers are in GDP-bound state, owing to GTPase activity of alpha-tubulin. This chain is Tubulin beta-2 chain (tubC), found in Emericella nidulans (strain FGSC A4 / ATCC 38163 / CBS 112.46 / NRRL 194 / M139) (Aspergillus nidulans).